The sequence spans 700 residues: Glycine--tRNA ligase beta subunit (700 aa).

Belongs to the class-II aminoacyl-tRNA synthetase family. In terms of assembly, tetramer of two alpha and two beta subunits.

Its subcellular location is the cytoplasm. The catalysed reaction is tRNA(Gly) + glycine + ATP = glycyl-tRNA(Gly) + AMP + diphosphate. This chain is Glycine--tRNA ligase beta subunit, found in Janthinobacterium sp. (strain Marseille) (Minibacterium massiliensis).